We begin with the raw amino-acid sequence, 316 residues long: Ribonuclease Z (316 aa).

The Zn(2+) site is built by histidine 59, histidine 61, aspartate 63, histidine 64, histidine 135, aspartate 203, and histidine 261. Residue aspartate 63 is the Proton acceptor of the active site.

Belongs to the RNase Z family. In terms of assembly, homodimer. The cofactor is Zn(2+).

The catalysed reaction is Endonucleolytic cleavage of RNA, removing extra 3' nucleotides from tRNA precursor, generating 3' termini of tRNAs. A 3'-hydroxy group is left at the tRNA terminus and a 5'-phosphoryl group is left at the trailer molecule.. Zinc phosphodiesterase, which displays some tRNA 3'-processing endonuclease activity. Probably involved in tRNA maturation, by removing a 3'-trailer from precursor tRNA. The protein is Ribonuclease Z of Nanoarchaeum equitans (strain Kin4-M).